We begin with the raw amino-acid sequence, 525 residues long: Acetyl-CoA hydrolase (525 aa).

Position 280–284 (280–284 (GIGNI)) interacts with CoA. Glu305 serves as the catalytic 5-glutamyl coenzyme A thioester intermediate. Asn395 and Gly399 together coordinate CoA.

This sequence belongs to the acetyl-CoA hydrolase/transferase family.

The protein resides in the cytoplasm. It carries out the reaction acetyl-CoA + H2O = acetate + CoA + H(+). In terms of biological role, required for utilization of acetate. The protein is Acetyl-CoA hydrolase (acu-8) of Neurospora crassa (strain ATCC 24698 / 74-OR23-1A / CBS 708.71 / DSM 1257 / FGSC 987).